Here is a 237-residue protein sequence, read N- to C-terminus: Large ribosomal subunit protein uL3 (237 aa).

2 disordered regions span residues 133-155 and 213-237; these read ASHG…DPGK and PENA…EGAE. Polar residues predominate over residues 135–150; it reads HGNSITHRSHGSTGQR. The residue at position 151 (Gln-151) is an N5-methylglutamine. Low complexity predominate over residues 220–237; that stretch reads AGLRAGAKAEAAATEGAE.

The protein belongs to the universal ribosomal protein uL3 family. Part of the 50S ribosomal subunit. Forms a cluster with proteins L14 and L19. Methylated by PrmB.

Functionally, one of the primary rRNA binding proteins, it binds directly near the 3'-end of the 23S rRNA, where it nucleates assembly of the 50S subunit. In Brucella suis biovar 1 (strain 1330), this protein is Large ribosomal subunit protein uL3.